The sequence spans 544 residues: MAKDIKFSEEARRAMLRGVDALADAVKVTLGPKGRNVVLEKKFGSPLITNDGVTIAKEIELEDAFENMGAKLVAEVASKTNDVAGDGTTTATVLAQAMIREGLKNVTAGANPVGVRKGIEEAVKVALEGLHEISKPIEGKESIAQVASISAADEEVGSLIAEAMERVGNDGVITIEESKGFTTELEVVEGMQFDRGYASPYMVTDSDKMEAVLENPYILITDKKITNIQEILPVLEQVVQQGKPLLLIAEDVEGEALATLVVNKLRGTFNAVAVKAPGFGDRRKAMLEDISVLTGGELITEDLGLDLKSTEIGQLGRASKVVVTKENTTIVEGSGDSAQIAARVNQIRAQVEETTSEFDKEKLQERLAKLAGGVAVIKVGAATETELKERKLRIEDALNSTRAAVEEGIVSGGGTALVNVYKKVASIEADGDVQTGVNIVLRSLEEPIRQIAHNAGLEGSVIVERLKNEEIGVGFNAATNEWVNMIEKGIVDPTKVTRSALQNAASVAAMLLTTEAVVADKPEEGGSGGGMPDMGGMGGMGGMM.

Residues 29 to 32 (TLGP), 86 to 90 (DGTTT), Gly-413, 476 to 478 (NAA), and Asp-492 contribute to the ATP site.

The protein belongs to the chaperonin (HSP60) family. In terms of assembly, forms a cylinder of 14 subunits composed of two heptameric rings stacked back-to-back. Interacts with the co-chaperonin GroES.

The protein resides in the cytoplasm. The enzyme catalyses ATP + H2O + a folded polypeptide = ADP + phosphate + an unfolded polypeptide.. Together with its co-chaperonin GroES, plays an essential role in assisting protein folding. The GroEL-GroES system forms a nano-cage that allows encapsulation of the non-native substrate proteins and provides a physical environment optimized to promote and accelerate protein folding. This Bacillus pumilus (strain SAFR-032) protein is Chaperonin GroEL.